The chain runs to 1060 residues: RNA-binding protein 27 (1060 aa).

Disordered regions lie at residues 80 to 143 (PLEP…DGKW), 160 to 278 (YDWR…PKRR), and 319 to 416 (PPPG…PPPL). Basic and acidic residues-rich tracts occupy residues 84 to 102 (VKPE…KEEV) and 124 to 143 (SRSE…DGKW). Residues 165 to 185 (GRSKSRSKSRGLSRSRSRSRG) show a composition bias toward basic residues. Basic and acidic residues predominate over residues 186-211 (RSKDRDPNRNVEHRERSKFKSERNDL). Composition is skewed to low complexity over residues 225–235 (SSEQYSSGAQS) and 255–268 (SWSN…SSNS). The C3H1-type zinc-finger motif lies at 273–301 (PPPKRRCRDYDERGFCVLGDLCQFDHGND). 2 stretches are compositionally biased toward pro residues: residues 319-356 (PPPG…PGPG) and 371-384 (QPPP…PRPP). Over residues 387 to 402 (QSSLINSRDQPGTSAV) the composition is skewed to polar residues. At Thr447 the chain carries Phosphothreonine. Arg455 bears the Omega-N-methylarginine mark. The tract at residues 572–594 (LTKKPWLGKQGNNNQSKPGFLRK) is disordered. The RRM domain occupies 600 to 674 (TKLEVKKIPQ…RFIRVLWHRE (75 aa)). Positions 754–775 (HASTNQSDTSHLLNQTGGSSGE) are disordered. Positions 755-770 (ASTNQSDTSHLLNQTG) are enriched in polar residues. A coiled-coil region spans residues 810–887 (VQEVLKKKQE…KDELKTSSTV (78 aa)). Phosphoserine is present on Ser928. The segment at 943 to 982 (GRGKTISSQGRGRGRGRGRGRGSLNHMVVDHRPKALPGGG) is disordered. A phosphoserine mark is found at Ser1012 and Ser1020. The segment at 1014–1060 (HKPKVPSISTETEEEEVKEEETETSDLFLHDDDDEDEDEYESRSWRR) is disordered. 2 stretches are compositionally biased toward acidic residues: residues 1024–1037 (ETEE…ETET) and 1044–1053 (DDDDEDEDEY).

The protein localises to the cytoplasm. It localises to the nucleus speckle. Functionally, may be involved in the turnover of nuclear polyadenylated (pA+) RNA. The chain is RNA-binding protein 27 from Mus musculus (Mouse).